We begin with the raw amino-acid sequence, 161 residues long: Phosphopantetheine adenylyltransferase (161 aa).

T10 contributes to the substrate binding site. Residues 10 to 11 (TF) and H18 each bind ATP. K42, M74, and R88 together coordinate substrate. ATP contacts are provided by residues 89 to 91 (GLR), E99, and 124 to 130 (WSFISSS).

The protein belongs to the bacterial CoaD family. In terms of assembly, homohexamer. The cofactor is Mg(2+).

The protein resides in the cytoplasm. It catalyses the reaction (R)-4'-phosphopantetheine + ATP + H(+) = 3'-dephospho-CoA + diphosphate. It participates in cofactor biosynthesis; coenzyme A biosynthesis; CoA from (R)-pantothenate: step 4/5. Reversibly transfers an adenylyl group from ATP to 4'-phosphopantetheine, yielding dephospho-CoA (dPCoA) and pyrophosphate. This chain is Phosphopantetheine adenylyltransferase, found in Serratia marcescens.